Consider the following 485-residue polypeptide: Ribulose bisphosphate carboxylase large chain (485 aa).

N124 and T174 together coordinate substrate. Catalysis depends on K176, which acts as the Proton acceptor. A substrate-binding site is contributed by K178. Positions 202, 204, and 205 each coordinate Mg(2+). The residue at position 202 (K202) is an N6-carboxylysine. The active-site Proton acceptor is H294. R295, H327, and S379 together coordinate substrate.

It belongs to the RuBisCO large chain family. Type I subfamily. As to quaternary structure, heterohexadecamer of 8 large chains and 8 small chains. The cofactor is Mg(2+).

It carries out the reaction 2 (2R)-3-phosphoglycerate + 2 H(+) = D-ribulose 1,5-bisphosphate + CO2 + H2O. It catalyses the reaction D-ribulose 1,5-bisphosphate + O2 = 2-phosphoglycolate + (2R)-3-phosphoglycerate + 2 H(+). Functionally, ruBisCO catalyzes two reactions: the carboxylation of D-ribulose 1,5-bisphosphate, the primary event in carbon dioxide fixation, as well as the oxidative fragmentation of the pentose substrate in the photorespiration process. Both reactions occur simultaneously and in competition at the same active site. This chain is Ribulose bisphosphate carboxylase large chain, found in Rhodopseudomonas palustris (strain BisB18).